A 710-amino-acid polypeptide reads, in one-letter code: E3 ubiquitin-protein ligase TRIM9 (710 aa).

The segment at 10–50 adopts an RING-type zinc-finger fold; the sequence is CPVCGSFYREPIILPCSHNLCQACARNILVQTPESESPQSH. Position 41 is a phosphothreonine (T41). A phosphoserine mark is found at S44, S46, and S49. 2 B box-type zinc fingers span residues 163–212 and 224–266; these read AAAL…LVPP and RKVS…VKAL. Positions 168, 171, 193, 198, 229, 232, 252, and 258 each coordinate Zn(2+). The stretch at 273-340 forms a coiled coil; the sequence is HKSQLSQALN…KAQLLARVNK (68 aa). In terms of domain architecture, COS spans 374–432; the sequence is IKENDPSGFLQISDALIRRVHLTEDQWGKGTLTPRMTTDFDLSLDNSPLLQSIHQLDFV. Residues 440–535 form the Fibronectin type-III domain; sequence VPATPILQLE…KTLVLQTSEV (96 aa). The B30.2/SPRY domain occupies 533–702; that stretch reads SEVAWFAFDP…LHTGLPVPDF (170 aa).

It belongs to the TRIM/RBCC family. Interacts with SNAP25. In terms of processing, auto-ubiquitinated. Poly-ubiquitinated in cultured cells, whereas it is monoubiquitinated in vitro. In terms of tissue distribution, brain. Highly expressed in the cerebral cortex (at protein level). Severely decreased in the affected brain areas in Parkinson disease and dementia with Lewy bodies.

It is found in the cytoplasm. It localises to the cell projection. Its subcellular location is the dendrite. The protein localises to the cytoplasmic vesicle. The protein resides in the secretory vesicle. It is found in the synaptic vesicle. It localises to the synapse. Its subcellular location is the cytoskeleton. The catalysed reaction is S-ubiquitinyl-[E2 ubiquitin-conjugating enzyme]-L-cysteine + [acceptor protein]-L-lysine = [E2 ubiquitin-conjugating enzyme]-L-cysteine + N(6)-ubiquitinyl-[acceptor protein]-L-lysine.. Its pathway is protein modification; protein ubiquitination. In terms of biological role, E3 ubiquitin-protein ligase which ubiquitinates itself in cooperation with an E2 enzyme UBE2D2/UBC4 and serves as a targeting signal for proteasomal degradation. May play a role in regulation of neuronal functions and may also participate in the formation or breakdown of abnormal inclusions in neurodegenerative disorders. May act as a regulator of synaptic vesicle exocytosis by controlling the availability of SNAP25 for the SNARE complex formation. The polypeptide is E3 ubiquitin-protein ligase TRIM9 (TRIM9) (Homo sapiens (Human)).